The chain runs to 288 residues: Shikimate dehydrogenase (NADP(+)) (288 aa).

Residues 18–20 (SRS) and threonine 65 each bind shikimate. Lysine 69 acts as the Proton acceptor in catalysis. Glutamate 81 is a binding site for NADP(+). The shikimate site is built by asparagine 90 and aspartate 106. Residues 131-135 (GAGGA), 155-160 (NRTLAK), and methionine 223 each bind NADP(+). Tyrosine 225 is a binding site for shikimate. Glycine 246 is an NADP(+) binding site.

It belongs to the shikimate dehydrogenase family. Homodimer.

It catalyses the reaction shikimate + NADP(+) = 3-dehydroshikimate + NADPH + H(+). It participates in metabolic intermediate biosynthesis; chorismate biosynthesis; chorismate from D-erythrose 4-phosphate and phosphoenolpyruvate: step 4/7. Functionally, involved in the biosynthesis of the chorismate, which leads to the biosynthesis of aromatic amino acids. Catalyzes the reversible NADPH linked reduction of 3-dehydroshikimate (DHSA) to yield shikimate (SA). The protein is Shikimate dehydrogenase (NADP(+)) of Verminephrobacter eiseniae (strain EF01-2).